Here is a 231-residue protein sequence, read N- to C-terminus: Large ribosomal subunit protein uL1 (231 aa).

The protein belongs to the universal ribosomal protein uL1 family. In terms of assembly, part of the 50S ribosomal subunit.

In terms of biological role, binds directly to 23S rRNA. The L1 stalk is quite mobile in the ribosome, and is involved in E site tRNA release. Its function is as follows. Protein L1 is also a translational repressor protein, it controls the translation of the L11 operon by binding to its mRNA. The protein is Large ribosomal subunit protein uL1 of Halorhodospira halophila (strain DSM 244 / SL1) (Ectothiorhodospira halophila (strain DSM 244 / SL1)).